Consider the following 147-residue polypeptide: Hemoglobin subunit beta-1 (147 aa).

The region spanning 3–147 is the Globin domain; sequence NLTAKERQLI…IADALGKGYH (145 aa). The heme b site is built by His-64 and His-93.

The protein belongs to the globin family. In terms of assembly, heterotetramer of two alpha chains and two beta chains. As to expression, red blood cells.

Its function is as follows. Involved in oxygen transport from the lung to the various peripheral tissues. In Xenopus tropicalis (Western clawed frog), this protein is Hemoglobin subunit beta-1 (hbb1).